The primary structure comprises 349 residues: tRNA N6-adenosine threonylcarbamoyltransferase (349 aa).

Fe cation contacts are provided by histidine 114 and histidine 118. Substrate is bound by residues 136–140 (IMSGG), aspartate 169, glycine 182, and asparagine 280. Position 308 (aspartate 308) interacts with Fe cation.

The protein belongs to the KAE1 / TsaD family. The cofactor is Fe(2+).

The protein localises to the cytoplasm. The catalysed reaction is L-threonylcarbamoyladenylate + adenosine(37) in tRNA = N(6)-L-threonylcarbamoyladenosine(37) in tRNA + AMP + H(+). Its function is as follows. Required for the formation of a threonylcarbamoyl group on adenosine at position 37 (t(6)A37) in tRNAs that read codons beginning with adenine. Is involved in the transfer of the threonylcarbamoyl moiety of threonylcarbamoyl-AMP (TC-AMP) to the N6 group of A37, together with TsaE and TsaB. TsaD likely plays a direct catalytic role in this reaction. In Ehrlichia chaffeensis (strain ATCC CRL-10679 / Arkansas), this protein is tRNA N6-adenosine threonylcarbamoyltransferase.